The following is a 498-amino-acid chain: ADP,ATP carrier protein 1 (498 aa).

Residues 1-33 (MSTTKSDNYISELRKVIWPIERYENKKFLPMAF) lie on the Cytoplasmic side of the membrane. The chain crosses the membrane as a helical span at residues 34 to 54 (MMFCILLNYSTLRSIKDGFVV). The cysteines at positions 37 and 85 are disulfide-linked. Topologically, residues 55 to 67 (TDIGAEAISFLKT) are extracellular. The helical transmembrane segment at 68–88 (YIVLPSAVIAMIVYVKLCDIL) threads the bilayer. The Cytoplasmic portion of the chain corresponds to 89-92 (KQEN). A helical transmembrane segment spans residues 93-113 (VFYVITSFFLAYFALFAFVLY). Topologically, residues 114 to 147 (PNPDLVHPNPEAIESLSLAYPNFKWFIRIVGKWS) are extracellular. Residues 148–168 (FASFYTMAELWGTLMLSLLFW) form a helical membrane-spanning segment. Topologically, residues 169-184 (QFANQITKTDEAKRFY) are cytoplasmic. The helical transmembrane segment at 185–205 (SMFGLLANLALPVTSLIIGYF) threads the bilayer. Residues 206–218 (LHEKTQIVAEHLK) lie on the Extracellular side of the membrane. Residues 219–239 (FTPLFVIMIISSLAVILTYRW) form a helical membrane-spanning segment. At 240 to 279 (MNKNVLTDPKLYDPALVKGKKAKAKMSLIESFKMIFTSKY) the chain is on the cytoplasmic side. The helical transmembrane segment at 280-300 (VGYIALLLIAYGISVNLVEGV) threads the bilayer. The Extracellular segment spans residues 301-320 (WKSKLKELHPTKEAYTMYMG). Residues 321–341 (QFQAYQGWVAIAFMIIGSNIL) form a helical membrane-spanning segment. The Cytoplasmic portion of the chain corresponds to 342–348 (RKVSWLT). The chain crosses the membrane as a helical span at residues 349–369 (AAMITPLMMLITGIAFFAFIF). Residues 370–379 (FDSVIAMYLT) lie on the Extracellular side of the membrane. Residues 380–400 (GILASGPLALAVMIGTIQNVL) traverse the membrane as a helical segment. Residues 401-438 (SKGVKYSLFDATKNMAYIPLDKDLRVKGQAAVEVIGGR) are Cytoplasmic-facing. 436-442 (GGRFGKS) provides a ligand contact to ATP. Residues 439–459 (FGKSGGAIIQSTFFIIFPALG) form a helical membrane-spanning segment. Over 460 to 465 (FVEATP) the chain is Extracellular. A helical transmembrane segment spans residues 466–486 (YFASIFFVIVILWIYAVKGLN). Residues 487-498 (KEYQVLVNNTEK) are Cytoplasmic-facing.

This sequence belongs to the ADP/ATP translocase tlc family.

It is found in the cell membrane. Functionally, provides the rickettsial cell with host ATP in exchange for rickettsial ADP. This is an obligate exchange system. This energy acquiring activity is an important component of rickettsial parasitism. This is ADP,ATP carrier protein 1 (tlcA) from Rickettsia bellii (strain RML369-C).